The primary structure comprises 577 residues: Jasmonoyl--L-amino acid synthetase JAR4 (577 aa).

S99 contacts ATP. Residue S102 participates in jasmonate binding. ATP contacts are provided by residues M119, T122, G163, N168, and 331–336 (GSSEGW). 166–170 (TTNVY) provides a ligand contact to an L-alpha-amino acid. Jasmonate is bound at residue 328 to 331 (ADYG). An an L-alpha-amino acid-binding site is contributed by 531–535 (KILDH).

It belongs to the IAA-amido conjugating enzyme family.

The enzyme catalyses a jasmonate + an L-alpha-amino acid + ATP = a jasmonyl-L-amino acid + AMP + diphosphate + H(+). Its function is as follows. Catalyzes the synthesis of jasmonate-amino acid conjugates by adenylation. Catalyzes the conjugation of jasmonate (JA) to Ile, Leu and Val. Catalyzes the conjugation of jasmonate (JA) to Ile to mediate defense signaling and resistance to the herbivore Manduca sexta caterpillars. The chain is Jasmonoyl--L-amino acid synthetase JAR4 from Nicotiana attenuata (Coyote tobacco).